Here is a 343-residue protein sequence, read N- to C-terminus: CRISPR-associated endonuclease Cas1 1 (343 aa).

Mn(2+)-binding residues include Glu166, His234, and Glu249.

Belongs to the CRISPR-associated endonuclease Cas1 family. Homodimer, forms a heterotetramer with a Cas2 homodimer. It depends on Mg(2+) as a cofactor. Mn(2+) is required as a cofactor.

CRISPR (clustered regularly interspaced short palindromic repeat), is an adaptive immune system that provides protection against mobile genetic elements (viruses, transposable elements and conjugative plasmids). CRISPR clusters contain spacers, sequences complementary to antecedent mobile elements, and target invading nucleic acids. CRISPR clusters are transcribed and processed into CRISPR RNA (crRNA). Acts as a dsDNA endonuclease. Involved in the integration of spacer DNA into the CRISPR cassette. The protein is CRISPR-associated endonuclease Cas1 1 of Chlorobaculum tepidum (strain ATCC 49652 / DSM 12025 / NBRC 103806 / TLS) (Chlorobium tepidum).